Consider the following 517-residue polypeptide: Crotonobetaine/carnitine--CoA ligase (517 aa).

Belongs to the ATP-dependent AMP-binding enzyme family.

The enzyme catalyses 4-(trimethylamino)butanoate + ATP + CoA = 4-(trimethylamino)butanoyl-CoA + AMP + diphosphate. It carries out the reaction crotonobetaine + ATP + CoA = crotonobetainyl-CoA + AMP + diphosphate. The catalysed reaction is (R)-carnitine + ATP + CoA = (R)-carnitinyl-CoA + AMP + diphosphate. It functions in the pathway amine and polyamine metabolism; carnitine metabolism. Catalyzes the transfer of CoA to carnitine, generating the initial carnitinyl-CoA needed for the CaiB reaction cycle. Also has activity toward crotonobetaine and gamma-butyrobetaine. This chain is Crotonobetaine/carnitine--CoA ligase, found in Salmonella paratyphi B (strain ATCC BAA-1250 / SPB7).